The following is a 434-amino-acid chain: D-amino acid dehydrogenase (434 aa).

Position 3–17 (3–17 (VIVLGSGVIGTTTAY)) interacts with FAD.

This sequence belongs to the DadA oxidoreductase family. Requires FAD as cofactor.

The enzyme catalyses a D-alpha-amino acid + A + H2O = a 2-oxocarboxylate + AH2 + NH4(+). In terms of biological role, oxidative deamination of D-amino acids. This chain is D-amino acid dehydrogenase, found in Bordetella bronchiseptica (strain ATCC BAA-588 / NCTC 13252 / RB50) (Alcaligenes bronchisepticus).